The sequence spans 225 residues: Ribose-5-phosphate isomerase A (225 aa).

Substrate contacts are provided by residues 32 to 35 (TGST), 85 to 88 (DGAD), and 98 to 101 (KGGG). Glu107 acts as the Proton acceptor in catalysis. Position 125 (Lys125) interacts with substrate.

It belongs to the ribose 5-phosphate isomerase family. Homodimer.

The enzyme catalyses aldehydo-D-ribose 5-phosphate = D-ribulose 5-phosphate. It functions in the pathway carbohydrate degradation; pentose phosphate pathway; D-ribose 5-phosphate from D-ribulose 5-phosphate (non-oxidative stage): step 1/1. Functionally, catalyzes the reversible conversion of ribose-5-phosphate to ribulose 5-phosphate. The sequence is that of Ribose-5-phosphate isomerase A from Marinobacter nauticus (strain ATCC 700491 / DSM 11845 / VT8) (Marinobacter aquaeolei).